Consider the following 189-residue polypeptide: Probable nicotinate-nucleotide adenylyltransferase (189 aa).

The protein belongs to the NadD family.

The catalysed reaction is nicotinate beta-D-ribonucleotide + ATP + H(+) = deamido-NAD(+) + diphosphate. The protein operates within cofactor biosynthesis; NAD(+) biosynthesis; deamido-NAD(+) from nicotinate D-ribonucleotide: step 1/1. Catalyzes the reversible adenylation of nicotinate mononucleotide (NaMN) to nicotinic acid adenine dinucleotide (NaAD). The polypeptide is Probable nicotinate-nucleotide adenylyltransferase (Staphylococcus aureus (strain N315)).